Consider the following 100-residue polypeptide: Large ribosomal subunit protein uL23 (100 aa).

Belongs to the universal ribosomal protein uL23 family. In terms of assembly, part of the 50S ribosomal subunit. Contacts protein L29, and trigger factor when it is bound to the ribosome.

In terms of biological role, one of the early assembly proteins it binds 23S rRNA. One of the proteins that surrounds the polypeptide exit tunnel on the outside of the ribosome. Forms the main docking site for trigger factor binding to the ribosome. This Yersinia pestis bv. Antiqua (strain Antiqua) protein is Large ribosomal subunit protein uL23.